The following is a 383-amino-acid chain: uncharacterized protein (383 aa).

It belongs to the peptidase M20 family.

This is an uncharacterized protein from Staphylococcus aureus (strain MRSA252).